Consider the following 37-residue polypeptide: Somatostatin-37 (37 aa).

Residues 1 to 2 (AL) constitute a propeptide that is removed on maturation. A disulfide bond links cysteine 26 and cysteine 37.

The protein belongs to the somatostatin family.

Its subcellular location is the secreted. Functionally, somatostatin inhibits the release of somatotropin. The polypeptide is Somatostatin-37 (sst) (Petromyzon marinus (Sea lamprey)).